The primary structure comprises 769 residues: Serine/threonine-protein kinase PLK4 (769 aa).

The Protein kinase domain occupies 14–267; the sequence is YEVQHLLGKG…LEAVLCHPFM (254 aa). ATP contacts are provided by residues 20 to 28 and lysine 43; that span reads LGKGGFATV. The active-site Proton acceptor is the aspartate 138. One can recognise a Cryptic POLO box 1 (CPB1) domain in the interval 381 to 498; sequence EDRISVPPLN…ARFVGLVKSK (118 aa). The region spanning 499-602 is the Cryptic POLO box 2 (CPB2) domain; the sequence is TPKVTYFSTL…GRRPITDVQP (104 aa). The POLO box domain occupies 660–739; it reads PIKRINVPDI…IPNIQLKLKT (80 aa).

This sequence belongs to the protein kinase superfamily. Ser/Thr protein kinase family. CDC5/Polo subfamily. Homodimer. Post-translationally, ubiquitinated by the SCF(Slimb) ubiquitin ligase complex; leading to its degradation by the proteasome during interphase and regulating centriole number and ensuring the block to centriole reduplication.

Its subcellular location is the cytoplasm. It localises to the cytoskeleton. It is found in the microtubule organizing center. The protein resides in the centrosome. The protein localises to the centriole. It carries out the reaction L-seryl-[protein] + ATP = O-phospho-L-seryl-[protein] + ADP + H(+). The enzyme catalyses L-threonyl-[protein] + ATP = O-phospho-L-threonyl-[protein] + ADP + H(+). In terms of biological role, serine/threonine-protein kinase that plays a central role in centriole duplication. Able to trigger procentriole formation on the surface of the mother centriole cylinder, using mother centriole as a platform, leading to the recruitment of centriole biogenesis proteins such as sas-6. When overexpressed, it is able to induce centrosome amplification through the simultaneous generation of multiple procentrioles adjoining each parental centriole during S phase. Centrosome amplification following overexpression can initiate tumorigenesis, highlighting the importance of centrosome regulation in cancers. This chain is Serine/threonine-protein kinase PLK4 (SAK), found in Drosophila sechellia (Fruit fly).